Here is a 52-residue protein sequence, read N- to C-terminus: Light-harvesting protein B800/830/1020 alpha-1 chain (52 aa).

Topologically, residues 1 to 12 (MWRIWKVFDPRR) are cytoplasmic. Residues 13–33 (ILIATAIWLIIIALTIHVILM) form a helical membrane-spanning segment. Histidine 29 contributes to the a bacteriochlorophyll binding site. The Periplasmic portion of the chain corresponds to 34 to 52 (TTERFNWLEGAPAAEYYSS).

The protein belongs to the antenna complex alpha subunit family. As to quaternary structure, the core complex is formed by different alpha and beta chains, binding bacteriochlorophyll molecules, and arranged most probably in tetrameric structures disposed around the reaction center. The non-pigmented gamma chains may constitute additional components.

It is found in the cell inner membrane. In terms of biological role, antenna complexes are light-harvesting systems, which transfer the excitation energy to the reaction centers. The chain is Light-harvesting protein B800/830/1020 alpha-1 chain from Halorhodospira halochloris (Ectothiorhodospira halochloris).